A 295-amino-acid polypeptide reads, in one-letter code: MPVDTLTPGARDTPALPIRLRTKVPGYLLRRPADGGARKPSAVERLEADKAKYVKSLHVANTRQEPVQPLLCKQPLFSPGTRRTVLTPSRRALPGPGCRPQLDLDILSSLINLCDSPVSPAEASRTPGRAEGARQPPLATPPRPPPSIAAVRRVDVLPLPASPIQPCPSPGPAAASSPVRPPGLQRSKSDLSERFSRAAADLERFFNFCGLDPEEARGLGVAHLARASSDIVSLAGPSAGPASSEGGCSRRSSVTVEERARERVPYGVSVIERNARVIKWLYGLRQARETPAAEC.

Disordered regions lie at residues 117-148 and 160-191; these read PVSP…PPSI and PASP…KSDL. Composition is skewed to pro residues over residues 138–147 and 160–171; these read LATPPRPPPS and PASPIQPCPSPG.

It belongs to the FAM110 family. As to quaternary structure, may interact with CSPP1.

The protein resides in the cytoplasm. The protein localises to the cytoskeleton. It localises to the microtubule organizing center. It is found in the centrosome. Its subcellular location is the spindle pole. This Bos taurus (Bovine) protein is Protein FAM110A (FAM110A).